Here is an 87-residue protein sequence, read N- to C-terminus: Beta-defensin 109 (87 aa).

A signal peptide spans 1-22; that stretch reads MRLHLLLLILLLFSILLSPVRG. 3 cysteine pairs are disulfide-bonded: C31/C59, C38/C53, and C43/C60.

The protein belongs to the beta-defensin family.

It localises to the secreted. In terms of biological role, has antibacterial activity. The sequence is that of Beta-defensin 109 (DEFB109) from Pan troglodytes (Chimpanzee).